Here is a 566-residue protein sequence, read N- to C-terminus: Proline--tRNA ligase (566 aa).

The protein belongs to the class-II aminoacyl-tRNA synthetase family. ProS type 1 subfamily. As to quaternary structure, homodimer.

The protein localises to the cytoplasm. The enzyme catalyses tRNA(Pro) + L-proline + ATP = L-prolyl-tRNA(Pro) + AMP + diphosphate. Its function is as follows. Catalyzes the attachment of proline to tRNA(Pro) in a two-step reaction: proline is first activated by ATP to form Pro-AMP and then transferred to the acceptor end of tRNA(Pro). As ProRS can inadvertently accommodate and process non-cognate amino acids such as alanine and cysteine, to avoid such errors it has two additional distinct editing activities against alanine. One activity is designated as 'pretransfer' editing and involves the tRNA(Pro)-independent hydrolysis of activated Ala-AMP. The other activity is designated 'posttransfer' editing and involves deacylation of mischarged Ala-tRNA(Pro). The misacylated Cys-tRNA(Pro) is not edited by ProRS. The chain is Proline--tRNA ligase from Campylobacter concisus (strain 13826).